A 334-amino-acid polypeptide reads, in one-letter code: Glycerol-3-phosphate dehydrogenase [NAD(P)+] (334 aa).

NADPH is bound by residues Trp13, Arg33, and Lys106. Sn-glycerol 3-phosphate contacts are provided by Lys106, Gly137, and Ser139. An NADPH-binding site is contributed by Ala141. Positions 192, 245, 255, 256, and 257 each coordinate sn-glycerol 3-phosphate. The Proton acceptor role is filled by Lys192. Arg256 lines the NADPH pocket. 2 residues coordinate NADPH: Val280 and Glu282.

Belongs to the NAD-dependent glycerol-3-phosphate dehydrogenase family.

It is found in the cytoplasm. It catalyses the reaction sn-glycerol 3-phosphate + NAD(+) = dihydroxyacetone phosphate + NADH + H(+). The enzyme catalyses sn-glycerol 3-phosphate + NADP(+) = dihydroxyacetone phosphate + NADPH + H(+). Its pathway is membrane lipid metabolism; glycerophospholipid metabolism. Catalyzes the reduction of the glycolytic intermediate dihydroxyacetone phosphate (DHAP) to sn-glycerol 3-phosphate (G3P), the key precursor for phospholipid synthesis. The polypeptide is Glycerol-3-phosphate dehydrogenase [NAD(P)+] (Chlamydia felis (strain Fe/C-56) (Chlamydophila felis)).